A 433-amino-acid chain; its full sequence is Phosphomethylpyrimidine synthase 2 (433 aa).

Residues asparagine 66, methionine 94, tyrosine 123, histidine 162, 184–186 (SRG), 225–228 (DALR), and glutamate 264 contribute to the substrate site. Histidine 268 lines the Zn(2+) pocket. Tyrosine 291 contacts substrate. Histidine 332 lines the Zn(2+) pocket. Residues cysteine 408, cysteine 411, and cysteine 415 each contribute to the [4Fe-4S] cluster site.

This sequence belongs to the ThiC family. The cofactor is [4Fe-4S] cluster.

The enzyme catalyses 5-amino-1-(5-phospho-beta-D-ribosyl)imidazole + S-adenosyl-L-methionine = 4-amino-2-methyl-5-(phosphooxymethyl)pyrimidine + CO + 5'-deoxyadenosine + formate + L-methionine + 3 H(+). The protein operates within cofactor biosynthesis; thiamine diphosphate biosynthesis. Its function is as follows. Catalyzes the synthesis of the hydroxymethylpyrimidine phosphate (HMP-P) moiety of thiamine from aminoimidazole ribotide (AIR) in a radical S-adenosyl-L-methionine (SAM)-dependent reaction. This is Phosphomethylpyrimidine synthase 2 from Saccharolobus solfataricus (strain ATCC 35092 / DSM 1617 / JCM 11322 / P2) (Sulfolobus solfataricus).